The sequence spans 155 residues: D-aminoacyl-tRNA deacylase (155 aa).

The Gly-cisPro motif, important for rejection of L-amino acids signature appears at 137-138 (GP).

It belongs to the DTD family. As to quaternary structure, homodimer.

The protein resides in the cytoplasm. The catalysed reaction is glycyl-tRNA(Ala) + H2O = tRNA(Ala) + glycine + H(+). It carries out the reaction a D-aminoacyl-tRNA + H2O = a tRNA + a D-alpha-amino acid + H(+). An aminoacyl-tRNA editing enzyme that deacylates mischarged D-aminoacyl-tRNAs. Also deacylates mischarged glycyl-tRNA(Ala), protecting cells against glycine mischarging by AlaRS. Acts via tRNA-based rather than protein-based catalysis; rejects L-amino acids rather than detecting D-amino acids in the active site. By recycling D-aminoacyl-tRNA to D-amino acids and free tRNA molecules, this enzyme counteracts the toxicity associated with the formation of D-aminoacyl-tRNA entities in vivo and helps enforce protein L-homochirality. This Nitrosococcus oceani (strain ATCC 19707 / BCRC 17464 / JCM 30415 / NCIMB 11848 / C-107) protein is D-aminoacyl-tRNA deacylase.